The sequence spans 145 residues: Large ribosomal subunit protein uL11 (145 aa).

This sequence belongs to the universal ribosomal protein uL11 family. In terms of assembly, part of the ribosomal stalk of the 50S ribosomal subunit. Interacts with L10 and the large rRNA to form the base of the stalk. L10 forms an elongated spine to which L12 dimers bind in a sequential fashion forming a multimeric L10(L12)X complex. In terms of processing, one or more lysine residues are methylated.

Functionally, forms part of the ribosomal stalk which helps the ribosome interact with GTP-bound translation factors. In Sulfurihydrogenibium sp. (strain YO3AOP1), this protein is Large ribosomal subunit protein uL11.